The following is a 186-amino-acid chain: ATP synthase subunit delta (186 aa).

It belongs to the ATPase delta chain family. As to quaternary structure, F-type ATPases have 2 components, F(1) - the catalytic core - and F(0) - the membrane proton channel. F(1) has five subunits: alpha(3), beta(3), gamma(1), delta(1), epsilon(1). F(0) has three main subunits: a(1), b(2) and c(10-14). The alpha and beta chains form an alternating ring which encloses part of the gamma chain. F(1) is attached to F(0) by a central stalk formed by the gamma and epsilon chains, while a peripheral stalk is formed by the delta and b chains.

The protein resides in the cell inner membrane. In terms of biological role, f(1)F(0) ATP synthase produces ATP from ADP in the presence of a proton or sodium gradient. F-type ATPases consist of two structural domains, F(1) containing the extramembraneous catalytic core and F(0) containing the membrane proton channel, linked together by a central stalk and a peripheral stalk. During catalysis, ATP synthesis in the catalytic domain of F(1) is coupled via a rotary mechanism of the central stalk subunits to proton translocation. Functionally, this protein is part of the stalk that links CF(0) to CF(1). It either transmits conformational changes from CF(0) to CF(1) or is implicated in proton conduction. This is ATP synthase subunit delta from Fuscovulum blasticum (Rhodobacter blasticus).